Reading from the N-terminus, the 258-residue chain is Imidazole glycerol phosphate synthase subunit HisF (258 aa).

Catalysis depends on residues Asp-11 and Asp-130.

Belongs to the HisA/HisF family. As to quaternary structure, heterodimer of HisH and HisF.

The protein localises to the cytoplasm. The enzyme catalyses 5-[(5-phospho-1-deoxy-D-ribulos-1-ylimino)methylamino]-1-(5-phospho-beta-D-ribosyl)imidazole-4-carboxamide + L-glutamine = D-erythro-1-(imidazol-4-yl)glycerol 3-phosphate + 5-amino-1-(5-phospho-beta-D-ribosyl)imidazole-4-carboxamide + L-glutamate + H(+). It functions in the pathway amino-acid biosynthesis; L-histidine biosynthesis; L-histidine from 5-phospho-alpha-D-ribose 1-diphosphate: step 5/9. IGPS catalyzes the conversion of PRFAR and glutamine to IGP, AICAR and glutamate. The HisF subunit catalyzes the cyclization activity that produces IGP and AICAR from PRFAR using the ammonia provided by the HisH subunit. The sequence is that of Imidazole glycerol phosphate synthase subunit HisF from Nitrobacter winogradskyi (strain ATCC 25391 / DSM 10237 / CIP 104748 / NCIMB 11846 / Nb-255).